The sequence spans 420 residues: Tyrosine-protein phosphatase non-receptor type 20 (420 aa).

Basic and acidic residues predominate over residues 1–11; the sequence is MSSPRDFRAEP. Disordered regions lie at residues 1 to 47 and 68 to 108; these read MSSP…VFEN and DVFE…SQAL. Positions 31–41 are enriched in polar residues; it reads LPSSSQENTPR. 2 positions are modified to phosphoserine: Ser76 and Ser120. The region spanning 159-412 is the Tyrosine-protein phosphatase domain; sequence IMQEFMALEL…HFCYDIVLEV (254 aa). Substrate contacts are provided by residues Asp323, 353 to 359, and Gln397; that span reads CSAGIGR. The active-site Phosphocysteine intermediate is Cys353.

Belongs to the protein-tyrosine phosphatase family. Non-receptor class subfamily. Present in many cell lines (at protein level). Widely expressed.

Its subcellular location is the nucleus. It is found in the cytoplasm. The protein localises to the cytoskeleton. It localises to the microtubule organizing center. The protein resides in the centrosome. The catalysed reaction is O-phospho-L-tyrosyl-[protein] + H2O = L-tyrosyl-[protein] + phosphate. Tyrosine-protein phosphatase targeted to sites of actin polymerization in response of varied extracellular stimuli. Has tyrosine phosphatase activity towards various tyrosyl phosphorylated substrates. This is Tyrosine-protein phosphatase non-receptor type 20 from Homo sapiens (Human).